The chain runs to 188 residues: Adenine phosphoribosyltransferase (188 aa).

This sequence belongs to the purine/pyrimidine phosphoribosyltransferase family. Homodimer.

The protein localises to the cytoplasm. It catalyses the reaction AMP + diphosphate = 5-phospho-alpha-D-ribose 1-diphosphate + adenine. It functions in the pathway purine metabolism; AMP biosynthesis via salvage pathway; AMP from adenine: step 1/1. In terms of biological role, catalyzes a salvage reaction resulting in the formation of AMP, that is energically less costly than de novo synthesis. This chain is Adenine phosphoribosyltransferase, found in Paraburkholderia phytofirmans (strain DSM 17436 / LMG 22146 / PsJN) (Burkholderia phytofirmans).